The sequence spans 747 residues: NAD-dependent protein deacetylase sirtuin-1 (747 aa).

A disordered region spans residues Met1–Ala135. Ala2 bears the N-acetylalanine mark. The tract at residues Ala2–Ala139 is interaction with CLOCK. The segment at Ala2–Cys268 is interaction with H1-4. Residues Ser14 and Ser26 each carry the phosphoserine modification. Residue Ser27 is modified to Phosphoserine; by MAPK8. A Nuclear localization signal motif is present at residues Pro32–Arg39. At Ser47 the chain carries Phosphoserine; by MAPK8. A compositionally biased stretch (low complexity) spans Pro61–Glu100. The segment covering Leu120–Ala135 has biased composition (acidic residues). The Nuclear export signal motif lies at Ala138 to Asn145. An interaction with CCAR2 region spans residues Arg143 to Pro541. Phosphoserine occurs at positions 159, 162, 172, and 173. A Nuclear localization signal motif is present at residues Ile223–Glu230. One can recognise a Deacetylase sirtuin-type domain in the interval Lys236–Glu496. Lys238 is subject to N6-acetyllysine. Residues Ile256–Leu259 form a required for interaction with the sumoylated form of CCAR2 region. Residues Gly261–Tyr280 and Gln345–Asp348 contribute to the NAD(+) site. The active-site Proton acceptor is the His363. Residues Cys371 and Cys374 each contribute to the Zn(2+) site. An N6-acetyllysine modification is found at Lys377. Zn(2+) is bound by residues Cys395 and Cys398. S-nitrosocysteine occurs at positions 395 and 398. Positions Ala425–Asp431 match the Nuclear export signal motif. The residue at position 430 (Lys430) is an N6-acetyllysine. NAD(+)-binding positions include Gly440–Ser442, Asn465–Glu467, and Cys482. At Lys513 the chain carries N6-acetyllysine. 2 disordered regions span residues Tyr523 to Ser549 and Ser562 to Asn587. Thr530 carries the phosphothreonine; by DYRK1A, DYRK3 and MAPK8 modification. Ser535 carries the post-translational modification Phosphoserine. Positions Asp537–Ser549 are enriched in polar residues. The phosphorylated at one of three serine residues stretch occupies residues Ser538 to Ser540. Thr544 is subject to Phosphothreonine. A Phosphoserine modification is found at Ser545. Basic and acidic residues predominate over residues Ser569–Gln580. Lys610 carries the post-translational modification N6-acetyllysine. A phosphoserine; by CaMK2 mark is found at Ser659 and Ser661. Positions Asp663–Ala726 are disordered. Residues Leu666–Ser677 are compositionally biased toward low complexity. Acidic residues predominate over residues Glu687–Asp707. The residue at position 719 (Thr719) is a Phosphothreonine. Ser747 bears the Phosphoserine mark.

Belongs to the sirtuin family. Class I subfamily. Interacts with XBP1 isoform 2. Found in a complex with PCAF and MYOD1. Interacts with FOXO1; the interaction deacetylates FOXO1, resulting in its nuclear retention and promotion of its transcriptional activity Component of the eNoSC complex, composed of SIRT1, SUV39H1 and RRP8. Interacts with HES1, HEY2 and PML. Interacts with RPS19BP1/AROS. Interacts with CCAR2 (via N-terminus); the interaction disrupts the interaction between SIRT1 and p53/TP53. Interacts with SETD7; the interaction induces the dissociation of SIRT1 from p53/TP53 and increases p53/TP53 activity. Interacts with MYCN, NR1I2, CREBZF, TSC2, TLE1, FOS, JUN, NR0B2, PPARG, NCOR, IRS1, IRS2 and NMNAT1. Interacts with HNF1A; the interaction occurs under nutrient restriction. Interacts with SUZ12; the interaction mediates the association with the PRC4 histone methylation complex which is specific as an association with PCR2 and PCR3 complex variants is not found. Interacts with BCL6; leads to a epigenetic repression of specific target genes. Interacts with CLOCK, BMAL1 and PER2. Interacts with PPARA; the interaction seems to be modulated by NAD(+) levels. Interacts with NR1H3 and this interaction is inhibited in the presence of CCAR2. Interacts with CHEK2. Interacts with p53/TP53. Exhibits a preferential interaction with sumoylated CCAR2 over its unmodified form. Interacts with PACS2. Interacts with SIRT7. Interacts with PUS7. Interacts with TULP3. Interacts with MORN3; the interaction enhances the ubiquitination of p53/TP53. As to quaternary structure, (Microbial infection) Interacts with HIV-1 Tat. Zn(2+) serves as cofactor. In terms of processing, methylated on multiple lysine residues; methylation is enhanced after DNA damage and is dispensable for deacetylase activity toward p53/TP53. Phosphorylated. Phosphorylated by STK4/MST1, resulting in inhibition of SIRT1-mediated p53/TP53 deacetylation. Phosphorylation by MAPK8/JNK1 at Ser-27, Ser-47, and Thr-530 leads to increased nuclear localization and enzymatic activity. Phosphorylation at Thr-530 by DYRK1A and DYRK3 activates deacetylase activity and promotes cell survival. Phosphorylation by mammalian target of rapamycin complex 1 (mTORC1) at Ser-47 inhibits deacetylation activity. Phosphorylated by CaMK2, leading to increased p53/TP53 and NF-kappa-B p65/RELA deacetylation activity. Phosphorylation at Ser-27 implicating MAPK9 is linked to protein stability. There is some ambiguity for some phosphosites: Ser-159/Ser-162 and Thr-544/Ser-545. Post-translationally, proteolytically cleaved by cathepsin B upon TNF-alpha treatment to yield catalytic inactive but stable SirtT1 75 kDa fragment (75SirT1). In terms of processing, S-nitrosylated by GAPDH, leading to inhibit the NAD-dependent protein deacetylase activity. Acetylated at various Lys residues. Deacetylated via an autocatalytic mechanism. Autodeacetylation at Lys-238 promotes its protein deacetylase activity. Post-translationally, ubiquitinated; leading to degradation. Deubiquitinated by USP22; leading to stabilization. In terms of tissue distribution, widely expressed.

It localises to the nucleus. The protein resides in the PML body. Its subcellular location is the cytoplasm. The protein localises to the mitochondrion. It carries out the reaction N(6)-acetyl-L-lysyl-[protein] + NAD(+) + H2O = 2''-O-acetyl-ADP-D-ribose + nicotinamide + L-lysyl-[protein]. The enzyme catalyses N(6)-propanoyl-L-lysyl-[protein] + NAD(+) + H2O = 3''-O-propanoyl-ADP-D-ribose + nicotinamide + L-lysyl-[protein]. It catalyses the reaction N(6)-(2E)-butenoyl-L-lysyl-[protein] + NAD(+) + H2O = 2''-O-(2E)-but-2-enoyl-ADP-D-ribose + nicotinamide + L-lysyl-[protein]. The catalysed reaction is N(6)-[(S)-lactoyl]-L-lysyl-[protein] + NAD(+) + H2O = 2''-O-(S)-lactoyl-ADP-D-ribose + nicotinamide + L-lysyl-[protein]. Inhibited by nicotinamide. Activated by resveratrol (3,5,4'-trihydroxy-trans-stilbene), butein (3,4,2',4'-tetrahydroxychalcone), piceatannol (3,5,3',4'-tetrahydroxy-trans-stilbene), Isoliquiritigenin (4,2',4'-trihydroxychalcone), fisetin (3,7,3',4'-tetrahydroxyflavone) and quercetin (3,5,7,3',4'-pentahydroxyflavone). MAPK8/JNK1 and RPS19BP1/AROS act as positive regulators of deacetylation activity. Negatively regulated by CCAR2. Its function is as follows. NAD-dependent protein deacetylase that links transcriptional regulation directly to intracellular energetics and participates in the coordination of several separated cellular functions such as cell cycle, response to DNA damage, metabolism, apoptosis and autophagy. Can modulate chromatin function through deacetylation of histones and can promote alterations in the methylation of histones and DNA, leading to transcriptional repression. Deacetylates a broad range of transcription factors and coregulators, thereby regulating target gene expression positively and negatively. Serves as a sensor of the cytosolic ratio of NAD(+)/NADH which is altered by glucose deprivation and metabolic changes associated with caloric restriction. Is essential in skeletal muscle cell differentiation and in response to low nutrients mediates the inhibitory effect on skeletal myoblast differentiation which also involves 5'-AMP-activated protein kinase (AMPK) and nicotinamide phosphoribosyltransferase (NAMPT). Component of the eNoSC (energy-dependent nucleolar silencing) complex, a complex that mediates silencing of rDNA in response to intracellular energy status and acts by recruiting histone-modifying enzymes. The eNoSC complex is able to sense the energy status of cell: upon glucose starvation, elevation of NAD(+)/NADP(+) ratio activates SIRT1, leading to histone H3 deacetylation followed by dimethylation of H3 at 'Lys-9' (H3K9me2) by SUV39H1 and the formation of silent chromatin in the rDNA locus. Deacetylates 'Lys-266' of SUV39H1, leading to its activation. Inhibits skeletal muscle differentiation by deacetylating PCAF and MYOD1. Deacetylates H2A and 'Lys-26' of H1-4. Deacetylates 'Lys-16' of histone H4 (in vitro). Involved in NR0B2/SHP corepression function through chromatin remodeling: Recruited to LRH1 target gene promoters by NR0B2/SHP thereby stimulating histone H3 and H4 deacetylation leading to transcriptional repression. Proposed to contribute to genomic integrity via positive regulation of telomere length; however, reports on localization to pericentromeric heterochromatin are conflicting. Proposed to play a role in constitutive heterochromatin (CH) formation and/or maintenance through regulation of the available pool of nuclear SUV39H1. Upon oxidative/metabolic stress decreases SUV39H1 degradation by inhibiting SUV39H1 polyubiquitination by MDM2. This increase in SUV39H1 levels enhances SUV39H1 turnover in CH, which in turn seems to accelerate renewal of the heterochromatin which correlates with greater genomic integrity during stress response. Deacetylates 'Lys-382' of p53/TP53 and impairs its ability to induce transcription-dependent proapoptotic program and modulate cell senescence. Deacetylates TAF1B and thereby represses rDNA transcription by the RNA polymerase I. Deacetylates MYC, promotes the association of MYC with MAX and decreases MYC stability leading to compromised transformational capability. Deacetylates FOXO3 in response to oxidative stress thereby increasing its ability to induce cell cycle arrest and resistance to oxidative stress but inhibiting FOXO3-mediated induction of apoptosis transcriptional activity; also leading to FOXO3 ubiquitination and protesomal degradation. Appears to have a similar effect on MLLT7/FOXO4 in regulation of transcriptional activity and apoptosis. Deacetylates DNMT1; thereby impairs DNMT1 methyltransferase-independent transcription repressor activity, modulates DNMT1 cell cycle regulatory function and DNMT1-mediated gene silencing. Deacetylates RELA/NF-kappa-B p65 thereby inhibiting its transactivating potential and augments apoptosis in response to TNF-alpha. Deacetylates HIF1A, KAT5/TIP60, RB1 and HIC1. Deacetylates FOXO1 resulting in its nuclear retention and enhancement of its transcriptional activity leading to increased gluconeogenesis in liver. Inhibits E2F1 transcriptional activity and apoptotic function, possibly by deacetylation. Involved in HES1- and HEY2-mediated transcriptional repression. In cooperation with MYCN seems to be involved in transcriptional repression of DUSP6/MAPK3 leading to MYCN stabilization by phosphorylation at 'Ser-62'. Deacetylates MEF2D. Required for antagonist-mediated transcription suppression of AR-dependent genes which may be linked to local deacetylation of histone H3. Represses HNF1A-mediated transcription. Required for the repression of ESRRG by CREBZF. Deacetylates NR1H3 and NR1H2 and deacetylation of NR1H3 at 'Lys-434' positively regulates transcription of NR1H3:RXR target genes, promotes NR1H3 proteasomal degradation and results in cholesterol efflux; a promoter clearing mechanism after reach round of transcription is proposed. Involved in lipid metabolism: deacetylates LPIN1, thereby inhibiting diacylglycerol synthesis. Implicated in regulation of adipogenesis and fat mobilization in white adipocytes by repression of PPARG which probably involves association with NCOR1 and SMRT/NCOR2. Deacetylates p300/EP300 and PRMT1. Deacetylates ACSS2 leading to its activation, and HMGCS1 deacetylation. Involved in liver and muscle metabolism. Through deacetylation and activation of PPARGC1A is required to activate fatty acid oxidation in skeletal muscle under low-glucose conditions and is involved in glucose homeostasis. Involved in regulation of PPARA and fatty acid beta-oxidation in liver. Involved in positive regulation of insulin secretion in pancreatic beta cells in response to glucose; the function seems to imply transcriptional repression of UCP2. Proposed to deacetylate IRS2 thereby facilitating its insulin-induced tyrosine phosphorylation. Deacetylates SREBF1 isoform SREBP-1C thereby decreasing its stability and transactivation in lipogenic gene expression. Involved in DNA damage response by repressing genes which are involved in DNA repair, such as XPC and TP73, deacetylating XRCC6/Ku70, and facilitating recruitment of additional factors to sites of damaged DNA, such as SIRT1-deacetylated NBN can recruit ATM to initiate DNA repair and SIRT1-deacetylated XPA interacts with RPA2. Also involved in DNA repair of DNA double-strand breaks by homologous recombination and specifically single-strand annealing independently of XRCC6/Ku70 and NBN. Promotes DNA double-strand breaks by mediating deacetylation of SIRT6. Transcriptional suppression of XPC probably involves an E2F4:RBL2 suppressor complex and protein kinase B (AKT) signaling. Transcriptional suppression of TP73 probably involves E2F4 and PCAF. Deacetylates WRN thereby regulating its helicase and exonuclease activities and regulates WRN nuclear translocation in response to DNA damage. Deacetylates APEX1 at 'Lys-6' and 'Lys-7' and stimulates cellular AP endonuclease activity by promoting the association of APEX1 to XRCC1. Catalyzes deacetylation of ERCC4/XPF, thereby impairing interaction with ERCC1 and nucleotide excision repair (NER). Increases p53/TP53-mediated transcription-independent apoptosis by blocking nuclear translocation of cytoplasmic p53/TP53 and probably redirecting it to mitochondria. Deacetylates XRCC6/Ku70 at 'Lys-539' and 'Lys-542' causing it to sequester BAX away from mitochondria thereby inhibiting stress-induced apoptosis. Is involved in autophagy, presumably by deacetylating ATG5, ATG7 and MAP1LC3B/ATG8. Deacetylates AKT1 which leads to enhanced binding of AKT1 and PDK1 to PIP3 and promotes their activation. Proposed to play role in regulation of STK11/LBK1-dependent AMPK signaling pathways implicated in cellular senescence which seems to involve the regulation of the acetylation status of STK11/LBK1. Can deacetylate STK11/LBK1 and thereby increase its activity, cytoplasmic localization and association with STRAD; however, the relevance of such activity in normal cells is unclear. In endothelial cells is shown to inhibit STK11/LBK1 activity and to promote its degradation. Deacetylates SMAD7 at 'Lys-64' and 'Lys-70' thereby promoting its degradation. Deacetylates CIITA and augments its MHC class II transactivation and contributes to its stability. Deacetylates MECOM/EVI1. Deacetylates PML at 'Lys-487' and this deacetylation promotes PML control of PER2 nuclear localization. During the neurogenic transition, represses selective NOTCH1-target genes through histone deacetylation in a BCL6-dependent manner and leading to neuronal differentiation. Regulates the circadian expression of several core clock genes, including BMAL1, RORC, PER2 and CRY1 and plays a critical role in maintaining a controlled rhythmicity in histone acetylation, thereby contributing to circadian chromatin remodeling. Deacetylates BMAL1 and histones at the circadian gene promoters in order to facilitate repression by inhibitory components of the circadian oscillator. Deacetylates PER2, facilitating its ubiquitination and degradation by the proteasome. Protects cardiomyocytes against palmitate-induced apoptosis. Deacetylates XBP1 isoform 2; deacetylation decreases protein stability of XBP1 isoform 2 and inhibits its transcriptional activity. Deacetylates PCK1 and directs its activity toward phosphoenolpyruvate production promoting gluconeogenesis. Involved in the CCAR2-mediated regulation of PCK1 and NR1D1. Deacetylates CTNB1 at 'Lys-49'. In POMC (pro-opiomelanocortin) neurons, required for leptin-induced activation of PI3K signaling. Deacetylates SOX9; promoting SOX9 nuclear localization and transactivation activity. Involved in the regulation of centrosome duplication: deacetylates CENATAC in G1 phase, allowing for SASS6 accumulation on the centrosome and subsequent procentriole assembly. Deacetylates NDC80/HEC1. In addition to protein deacetylase activity, also acts as a protein-lysine deacylase by mediating protein delactylation, depropionylation and decrotonylation. Mediates depropionylation of Osterix (SP7). Catalyzes decrotonylation of histones; it however does not represent a major histone decrotonylase. Mediates protein delactylation of TEAD1 and YAP1. Functionally, deacetylates 'Lys-382' of p53/TP53, however with lower activity than isoform 1. In combination, the two isoforms exert an additive effect. Isoform 2 regulates p53/TP53 expression and cellular stress response and is in turn repressed by p53/TP53 presenting a SIRT1 isoform-dependent auto-regulatory loop. In terms of biological role, catalytically inactive 75SirT1 may be involved in regulation of apoptosis. May be involved in protecting chondrocytes from apoptotic death by associating with cytochrome C and interfering with apoptosome assembly. (Microbial infection) In case of HIV-1 infection, interacts with and deacetylates the viral Tat protein. The viral Tat protein inhibits SIRT1 deacetylation activity toward RELA/NF-kappa-B p65, thereby potentiates its transcriptional activity and SIRT1 is proposed to contribute to T-cell hyperactivation during infection. This chain is NAD-dependent protein deacetylase sirtuin-1, found in Homo sapiens (Human).